The following is a 575-amino-acid chain: MPGPSLSLALVLSAMGALLRPGTPREEVFSTSALPREQATGSGALIFQQAWDWPLSSLWLPGSPLDPLCLVTLHGSGNGSRAPLRVVGVLSSYEQAFLEAVRRTHWGLSDLTTFAVCPAGNGQPVLPHLQRLQAWLGEPGGRWLVVLHLEEVTWEPTPLLRFQEPPPGGASPPELALLVVYPGPGLEVTVTGAGLPGTQSLCLTADSDFLALVVDHPEGAWRRPGLALTLRRRGNGALLSTAQLQALLFGADSRCFTRKTPALLLLLPARSSAPMPAHGRLDLVPFPQPRASPEPEEAPPSADPFLETLTRLVRALAGPPARASPPRLALDPGALAGFPQGQVNLSDPAALERLLDGEEPLLLLLPPTAATTGVPATPQGPKSPLWAAGLARRVAAELQAVAAELRALPGLPPAAPPLLARLLALCPGNPDSPGGPLRALLLLKALQGLRAEWRGRERSGSARAQRSAGAAAADGPCALRELSVDLRAERSVLIPETYQANNCQGACGWPQSDRNPRYGNHVVLLLKMQARGATLARPPCCVPTAYTGKLLISLSEERISAHHVPNMVATECGCR.

Residues 1–24 form the signal peptide; the sequence is MPGPSLSLALVLSAMGALLRPGTP. A propeptide spanning residues 25-466 is cleaved from the precursor; that stretch reads REEVFSTSAL…ERSGSARAQR (442 aa). Residues asparagine 78 and asparagine 344 are each glycosylated (N-linked (GlcNAc...) asparagine). Disulfide bonds link cysteine 477-cysteine 541, cysteine 503-cysteine 572, and cysteine 507-cysteine 574.

It belongs to the TGF-beta family. As to quaternary structure, homodimer; disulfide-linked. Post-translationally, preproprotein is proteolytically processed to generate N- and C-terminal cleavage products that homodimerize and associate to form a biologically active non-covalent complex. Binding of the non-covalent complex to AMHR2 induces dissociation of the pro-region from the mature C-terminal dimer. The N-terminal portion of the protein, despite having no intrinsic activity, has the role of amplifying the activity of the C-terminus. Expressed in fetal testis and adult ovaries.

The protein resides in the secreted. Functionally, plays an important role in several reproductive functions. Induces Muellerian duct regression during male fetal sexual differentiation and plays a role in Leydig cell differentiation and function. In female acts as a negative regulator of the primordial to primary follicle transition and decreases FSH sensitivity of growing follicles. AMH signals by binding to a specific type-II receptor, AMHR2, that heterodimerizes with type-I receptors (ACVR1 and BMPR1A), and recruiting SMAD proteins that are translocated to the nucleus to regulate target gene expression. This chain is Muellerian-inhibiting factor (AMH), found in Bos taurus (Bovine).